A 201-amino-acid chain; its full sequence is Protein lin-7 homolog B (201 aa).

A Kinase interacting site motif is present at residues 1–13 (MAALVEPLGLERE). Positions 10–65 (LEREVSRAVELLERLQRSGELPPQKLQALQRVLQSRFCSAIREVYEQLYDTLDITG) constitute an L27 domain. The 83-residue stretch at 93–175 (VVELPKTDEG…SVKLVVRYTP (83 aa)) folds into the PDZ domain.

The protein belongs to the lin-7 family. Forms a complex with CASK and CASKIN1. Component of the brain-specific heterotrimeric complex (LIN-10-LIN-2-LIN-7 complex) composed of at least APBA1, CASK, and LIN7, which associates with the motor protein KIF17 to transport vesicles along microtubules. Forms a heterotrimeric complex composed of MMP5, LIN7B and PATJ; the N-terminal L27 domain of PALS1 interacts with the L27 domain of PATJ and the C-terminal L27 domain of PALS1 interacts with the L27 domain of LIN7B. Forms a heterotrimeric complex with DLG1 and CASK via their L27 domains. Interacts with DLG4 and GRIN2B as well as CDH1 and CTNNB1, the channels KCNJ12/Kir2.2, KCNJ4/Kir2.3 and probably KCNJ2/Kir2.1 and SLC6A12/BGT-1 via its PDZ domain. The association of LIN7A with cadherin and beta-catenin is calcium-dependent, occurs at synaptic junctions and requires the actin cytoskeleton. Interacts with EGFR, ERBB2, ERBB3 and ERBB4 with both PDZ and KID domains. Interacts with ASIC3. Interacts with TOPK. Interacts with RTKN. Associates with KIF17 via APBA1. Interacts with APBA1. Interacts with MPP7. Interacts with DLG2. Interacts with DLG3.

It localises to the cell membrane. Its subcellular location is the basolateral cell membrane. It is found in the cell junction. The protein localises to the postsynaptic density membrane. The protein resides in the tight junction. Functionally, plays a role in establishing and maintaining the asymmetric distribution of channels and receptors at the plasma membrane of polarized cells. Forms membrane-associated multiprotein complexes that may regulate delivery and recycling of proteins to the correct membrane domains. The tripartite complex composed of LIN7 (LIN7A, LIN7B or LIN7C), CASK and APBA1 associates with the motor protein KIF17 to transport vesicles containing N-methyl-D-aspartate (NMDA) receptor subunit NR2B along microtubules. This complex may have the potential to couple synaptic vesicle exocytosis to cell adhesion in brain. Ensures the proper localization of GRIN2B (subunit 2B of the NMDA receptor) to neuronal postsynaptic density and may function in localizing synaptic vesicles at synapses where it is recruited by beta-catenin and cadherin. Required to localize Kir2 channels, GABA transporter (SLC6A12) and EGFR/ERBB1, ERBB2, ERBB3 and ERBB4 to the basolateral membrane of epithelial cells. May increase the amplitude of ASIC3 acid-evoked currents by stabilizing the channel at the cell surface. The chain is Protein lin-7 homolog B (LIN7B) from Bos taurus (Bovine).